The following is a 366-amino-acid chain: tRNA/tmRNA (uracil-C(5))-methyltransferase (366 aa).

Residues Gln190, Tyr218, Asn223, Glu239, and Asp299 each coordinate S-adenosyl-L-methionine. The active-site Nucleophile is Cys324. Glu358 acts as the Proton acceptor in catalysis.

The protein belongs to the class I-like SAM-binding methyltransferase superfamily. RNA M5U methyltransferase family. TrmA subfamily.

The catalysed reaction is uridine(54) in tRNA + S-adenosyl-L-methionine = 5-methyluridine(54) in tRNA + S-adenosyl-L-homocysteine + H(+). It catalyses the reaction uridine(341) in tmRNA + S-adenosyl-L-methionine = 5-methyluridine(341) in tmRNA + S-adenosyl-L-homocysteine + H(+). In terms of biological role, dual-specificity methyltransferase that catalyzes the formation of 5-methyluridine at position 54 (m5U54) in all tRNAs, and that of position 341 (m5U341) in tmRNA (transfer-mRNA). The chain is tRNA/tmRNA (uracil-C(5))-methyltransferase from Escherichia coli O7:K1 (strain IAI39 / ExPEC).